A 460-amino-acid polypeptide reads, in one-letter code: Elongation factor 1-alpha (460 aa).

Gly2 carries the n,N,N-trimethylglycine modification. Position 3 is an N6,N6-dimethyllysine; alternate (Lys3). Lys3 carries the N6-methyllysine; alternate modification. The tr-type G domain occupies 6–241; sequence KAHINVVVIG…DAIEQPKRPT (236 aa). The G1 stretch occupies residues 15-22; it reads GHVDSGKS. 15 to 22 is a GTP binding site; that stretch reads GHVDSGKS. At Lys31 the chain carries N6-methyllysine. Residues 71 to 75 form a G2 region; sequence GITID. Position 80 is an N6,N6,N6-trimethyllysine (Lys80). Positions 92-95 are G3; the sequence is DAPG. GTP-binding positions include 92 to 96 and 154 to 157; these read DAPGH and NKMD. The interval 154-157 is G4; the sequence is NKMD. The tract at residues 193–195 is G5; it reads SGF. Lys317 is subject to N6,N6-dimethyllysine; alternate. Lys317 is modified (N6-methyllysine; alternate). Lys391 bears the N6-methyllysine mark.

This sequence belongs to the TRAFAC class translation factor GTPase superfamily. Classic translation factor GTPase family. EF-Tu/EF-1A subfamily.

Its subcellular location is the cytoplasm. This protein promotes the GTP-dependent binding of aminoacyl-tRNA to the A-site of ribosomes during protein biosynthesis. The protein is Elongation factor 1-alpha (TEF) of Sordaria macrospora.